The chain runs to 451 residues: Chromosomal replication initiator protein DnaA (451 aa).

The domain I, interacts with DnaA modulators stretch occupies residues 1-101; that stretch reads MTENETIFWN…TSNHIFSRQT (101 aa). The interval 101 to 110 is domain II; sequence TINSLPAITS. Positions 111 to 329 are domain III, AAA+ region; the sequence is DLNPKYSFDN…GALKDISLVA (219 aa). Residues G155, G157, K158, and T159 each coordinate ATP. Residues 330–451 form a domain IV, binds dsDNA region; it reads NFKEIDKITV…EIETIKNKIK (122 aa).

This sequence belongs to the DnaA family. Oligomerizes as a right-handed, spiral filament on DNA at oriC.

Its subcellular location is the cytoplasm. Functionally, plays an essential role in the initiation and regulation of chromosomal replication. ATP-DnaA binds to the origin of replication (oriC) to initiate formation of the DNA replication initiation complex once per cell cycle. Binds the DnaA box (a 9 base pair repeat at the origin) and separates the double-stranded (ds)DNA. Forms a right-handed helical filament on oriC DNA; dsDNA binds to the exterior of the filament while single-stranded (ss)DNA is stabiized in the filament's interior. The ATP-DnaA-oriC complex binds and stabilizes one strand of the AT-rich DNA unwinding element (DUE), permitting loading of DNA polymerase. After initiation quickly degrades to an ADP-DnaA complex that is not apt for DNA replication. Binds acidic phospholipids. The protein is Chromosomal replication initiator protein DnaA of Streptococcus uberis (strain ATCC BAA-854 / 0140J).